The primary structure comprises 39 residues: Omega-theraphotoxin-Asp1a (39 aa).

3 cysteine pairs are disulfide-bonded: C4/C25, C8/C31, and C17/C36.

In terms of tissue distribution, expressed by the venom gland.

The protein localises to the secreted. Toxin that inhibits voltage-gated calcium channels in rat cerebellar granule cells (IC(50)&lt;200 nM). Is lethal to cockroaches. The sequence is that of Omega-theraphotoxin-Asp1a from Aphonopelma sp. (American tarantula).